The chain runs to 75 residues: Small ribosomal subunit protein eS31 (75 aa).

Residues C41, C44, C60, and C63 each contribute to the Zn(2+) site. The C4-type zinc finger occupies 41–63; that stretch reads CPRCGSIMAHHLKPNERWSCGKC.

It belongs to the eukaryotic ribosomal protein eS31 family. As to quaternary structure, part of the 30S ribosomal subunit. It depends on Zn(2+) as a cofactor.

In Saccharolobus solfataricus (strain ATCC 35092 / DSM 1617 / JCM 11322 / P2) (Sulfolobus solfataricus), this protein is Small ribosomal subunit protein eS31.